The primary structure comprises 548 residues: Chaperonin GroEL (548 aa).

Residues threonine 30 to proline 33, lysine 51, aspartate 87 to threonine 91, glycine 415, and aspartate 495 contribute to the ATP site.

The protein belongs to the chaperonin (HSP60) family. In terms of assembly, forms a cylinder of 14 subunits composed of two heptameric rings stacked back-to-back. Interacts with the co-chaperonin GroES.

Its subcellular location is the cytoplasm. It catalyses the reaction ATP + H2O + a folded polypeptide = ADP + phosphate + an unfolded polypeptide.. In terms of biological role, together with its co-chaperonin GroES, plays an essential role in assisting protein folding. The GroEL-GroES system forms a nano-cage that allows encapsulation of the non-native substrate proteins and provides a physical environment optimized to promote and accelerate protein folding. This chain is Chaperonin GroEL, found in Yersinia pseudotuberculosis serotype O:1b (strain IP 31758).